Reading from the N-terminus, the 298-residue chain is Tyrosine recombinase XerC (298 aa).

The region spanning 2 to 88 (TDLHTDVERY…ALRSFFDWLV (87 aa)) is the Core-binding (CB) domain. The Tyr recombinase domain occupies 109–288 (HLPKNIDVDD…DFQHLASVYD (180 aa)). Residues arginine 148, lysine 172, histidine 240, arginine 243, and histidine 266 contribute to the active site. The O-(3'-phospho-DNA)-tyrosine intermediate role is filled by tyrosine 275.

The protein belongs to the 'phage' integrase family. XerC subfamily. As to quaternary structure, forms a cyclic heterotetrameric complex composed of two molecules of XerC and two molecules of XerD, in which XerC interacts with XerD via its C-terminal region, XerD interacts with XerC via its C-terminal region and so on.

Its subcellular location is the cytoplasm. Its activity is regulated as follows. FtsK may regulate the catalytic switch between XerC and XerD in the heterotetrameric complex during the two steps of the recombination process. Functionally, site-specific tyrosine recombinase, which acts by catalyzing the cutting and rejoining of the recombining DNA molecules. Binds cooperatively to specific DNA consensus sequences that are separated from XerD binding sites by a short central region, forming the heterotetrameric XerC-XerD complex that recombines DNA substrates. The complex is essential to convert dimers of the bacterial chromosome into monomers to permit their segregation at cell division. It also contributes to the segregational stability of plasmids. In the complex XerC specifically exchanges the top DNA strands. This chain is Tyrosine recombinase XerC, found in Escherichia coli O157:H7.